We begin with the raw amino-acid sequence, 119 residues long: Large ribosomal subunit protein bL20 (119 aa).

Belongs to the bacterial ribosomal protein bL20 family.

Functionally, binds directly to 23S ribosomal RNA and is necessary for the in vitro assembly process of the 50S ribosomal subunit. It is not involved in the protein synthesizing functions of that subunit. The polypeptide is Large ribosomal subunit protein bL20 (Afipia carboxidovorans (strain ATCC 49405 / DSM 1227 / KCTC 32145 / OM5) (Oligotropha carboxidovorans)).